The following is a 287-amino-acid chain: MTAQLIDGKAIAANVREQVSRQVQARRQEGKRAPGLAVVLVGEDPASEVYVRNKHRACDKAGVHSVQHKLPADTTQADLEALIDSLNADCSIDGILVQLPLPDHLDARPILERIRPDKDVDGFHPYNLGRLAQRLPVLRPCTPKGIMTLLQESGIHARGLDAVIVGASNIVGRPMALELMLAGSTTTVCHRFTRDLESHVRRADLLVVAVGRPGLVKGEWVKEGAVVIDVGINRQDDGKLAGDVEFAPAAARASYITPVPGGVGPMTVASLLENTLFAAELHDGMHA.

NADP(+) contacts are provided by residues Gly166–Ser168 and Ile232.

It belongs to the tetrahydrofolate dehydrogenase/cyclohydrolase family. In terms of assembly, homodimer.

The catalysed reaction is (6R)-5,10-methylene-5,6,7,8-tetrahydrofolate + NADP(+) = (6R)-5,10-methenyltetrahydrofolate + NADPH. It catalyses the reaction (6R)-5,10-methenyltetrahydrofolate + H2O = (6R)-10-formyltetrahydrofolate + H(+). It participates in one-carbon metabolism; tetrahydrofolate interconversion. Catalyzes the oxidation of 5,10-methylenetetrahydrofolate to 5,10-methenyltetrahydrofolate and then the hydrolysis of 5,10-methenyltetrahydrofolate to 10-formyltetrahydrofolate. In Chromohalobacter salexigens (strain ATCC BAA-138 / DSM 3043 / CIP 106854 / NCIMB 13768 / 1H11), this protein is Bifunctional protein FolD.